We begin with the raw amino-acid sequence, 98 residues long: NADH-ubiquinone oxidoreductase chain 4L (98 aa).

3 helical membrane-spanning segments follow: residues 1–21 (MSMVYINIFLAFILSFMGLLI), 30–50 (LLCLEGMMLSLFIMMTVTILT), and 61–81 (IILLVFAACEAALGLSLLVMI).

This sequence belongs to the complex I subunit 4L family. Core subunit of respiratory chain NADH dehydrogenase (Complex I) which is composed of 45 different subunits.

The protein resides in the mitochondrion inner membrane. The catalysed reaction is a ubiquinone + NADH + 5 H(+)(in) = a ubiquinol + NAD(+) + 4 H(+)(out). Functionally, core subunit of the mitochondrial membrane respiratory chain NADH dehydrogenase (Complex I) which catalyzes electron transfer from NADH through the respiratory chain, using ubiquinone as an electron acceptor. Part of the enzyme membrane arm which is embedded in the lipid bilayer and involved in proton translocation. The chain is NADH-ubiquinone oxidoreductase chain 4L (MT-ND4L) from Martes americana (American marten).